We begin with the raw amino-acid sequence, 231 residues long: Flagellar L-ring protein 2 (231 aa).

The signal sequence occupies residues 1 to 15 (MKNLILILPLLMLTG). Cys-16 carries N-palmitoyl cysteine lipidation. The S-diacylglycerol cysteine moiety is linked to residue Cys-16. Residues 30–54 (SPVGSGLRTQADPIPVTPRMRTPVS) form a disordered region.

The protein belongs to the FlgH family. As to quaternary structure, the basal body constitutes a major portion of the flagellar organelle and consists of four rings (L,P,S, and M) mounted on a central rod.

It is found in the cell outer membrane. Its subcellular location is the bacterial flagellum basal body. Its function is as follows. Assembles around the rod to form the L-ring and probably protects the motor/basal body from shearing forces during rotation. The polypeptide is Flagellar L-ring protein 2 (Bradyrhizobium diazoefficiens (strain JCM 10833 / BCRC 13528 / IAM 13628 / NBRC 14792 / USDA 110)).